The sequence spans 248 residues: Proteasome subunit alpha type-3 (248 aa).

This sequence belongs to the peptidase T1A family. The 26S proteasome consists of a 20S proteasome core and two 19S regulatory subunits. The 20S proteasome core is composed of 28 subunits that are arranged in four stacked rings, resulting in a barrel-shaped structure. The two end rings are each formed by seven alpha subunits, and the two central rings are each formed by seven beta subunits. The catalytic chamber with the active sites is on the inside of the barrel.

The protein resides in the cytoplasm. Its subcellular location is the nucleus. The proteasome is a multicatalytic proteinase complex which is characterized by its ability to cleave peptides with Arg, Phe, Tyr, Leu, and Glu adjacent to the leaving group at neutral or slightly basic pH. The proteasome has an ATP-dependent proteolytic activity. This is Proteasome subunit alpha type-3 (psmA3) from Dictyostelium discoideum (Social amoeba).